The sequence spans 247 residues: DNA polymerase sliding clamp (247 aa).

The protein belongs to the PCNA family. Homotrimer. The subunits circularize to form a toroid; DNA passes through its center. Replication factor C (RFC) is required to load the toroid on the DNA.

In terms of biological role, sliding clamp subunit that acts as a moving platform for DNA processing. Responsible for tethering the catalytic subunit of DNA polymerase and other proteins to DNA during high-speed replication. In Natronomonas pharaonis (strain ATCC 35678 / DSM 2160 / CIP 103997 / JCM 8858 / NBRC 14720 / NCIMB 2260 / Gabara) (Halobacterium pharaonis), this protein is DNA polymerase sliding clamp.